A 252-amino-acid chain; its full sequence is uncharacterized protein (252 aa).

It belongs to the methyltransferase superfamily.

This is an uncharacterized protein from Mycobacterium sp. (strain JLS).